A 428-amino-acid polypeptide reads, in one-letter code: Synaptotagmin-1 (428 aa).

Topologically, residues 1 to 67 (MDSLLARVKR…KDKLINEIEN (67 aa)) are vesicular. The segment at 16-50 (ALNPAQEGVTGGPDAAGLPDVSTSSPGGGGAGDKL) is disordered. The helical transmembrane segment at 68-92 (LPIWAIVLIIAGSLLFLVCCVYCVC) threads the bilayer. Residues 93–428 (RRSCRKRKKK…HTLQEVPEKN (336 aa)) lie on the Cytoplasmic side of the membrane. Phosphoserine; by PRKC2 is present on serine 123. Residues 147–395 (STKSEVKLGK…PIGRCVLGCN (249 aa)) form a phospholipid binding region. C2 domains lie at 153–272 (KLGK…EDWK) and 286–419 (KLGD…AQWH). The Ca(2+) site is built by aspartate 184, aspartate 190, aspartate 242, phenylalanine 243, aspartate 244, serine 247, lysine 248, aspartate 250, aspartate 317, aspartate 323, aspartate 377, and aspartate 379.

This sequence belongs to the synaptotagmin family. As to quaternary structure, binds SNAP25. Isoform 3 binds SNAP25 with higher affinity. Ca(2+) serves as cofactor.

Its subcellular location is the cytoplasmic vesicle. It is found in the secretory vesicle. The protein resides in the synaptic vesicle membrane. It localises to the synapse. In terms of biological role, acts as inhibitor of neurotransmitter release. Overexpression leads to a decrease in the amplitude of the excitatory postsynaptic potential in dissected cholinergic and glutaminergic neurons while depletion with antisense oligonucleotides leads to an increase. Overexpression of isoform 1 blocks the reversal of synaptic depression by serotonin in sensory neurons. This chain is Synaptotagmin-1 (SYT1), found in Aplysia californica (California sea hare).